The following is a 786-amino-acid chain: MTSIFHFAIIFMLILQIRIQLSEESEFLVDRSKNGLIHVPKDLSQKTTILNISQNYISELWTSDILSLSKLRILIISHNRIQYLDISVFKFNQELEYLDLSHNKLVKISCHPTVNLKHLDLSFNAFDALPICKEFGNMSQLKFLGLSTTHLEKSSVLPIAHLNISKVLLVLGETYGEKEDPEGLQDFNTESLHIVFPTNKEFHFILDVSVKTVANLELSNIKCVLEDNKCSYFLSILAKLQTNPKLSNLTLNNIETTWNSFIRILQLVWHTTVWYFSISNVKLQGQLDFRDFDYSGTSLKALSIHQVVSDVFGFPQSYIYEIFSNMNIKNFTVSGTRMVHMLCPSKISPFLHLDFSNNLLTDTVFENCGHLTELETLILQMNQLKELSKIAEMTTQMKSLQQLDISQNSVSYDEKKGDCSWTKSLLSLNMSSNILTDTIFRCLPPRIKVLDLHSNKIKSIPKQVVKLEALQELNVAFNSLTDLPGCGSFSSLSVLIIDHNSVSHPSADFFQSCQKMRSIKAGDNPFQCTCELGEFVKNIDQVSSEVLEGWPDSYKCDYPESYRGTLLKDFHMSELSCNITLLIVTIVATMLVLAVTVTSLCSYLDLPWYLRMVCQWTQTRRRARNIPLEELQRNLQFHAFISYSGHDSFWVKNELLPNLEKEGMQICLHERNFVPGKSIVENIITCIEKSYKSIFVLSPNFVQSEWCHYELYFAHHNLFHEGSNSLILILLEPIPQYSIPSSYHKLKSLMARRTYLEWPKEKSKRGLFWANLRAAINIKLTEQAKK.

Positions 1 to 24 (MTSIFHFAIIFMLILQIRIQLSEE) are cleaved as a signal peptide. The Extracellular portion of the chain corresponds to 25 to 580 (SEFLVDRSKN…HMSELSCNIT (556 aa)). N-linked (GlcNAc...) asparagine glycosylation occurs at Asn-51. LRR repeat units lie at residues 54–77 (QNYI…LIIS), 78–101 (HNRI…LDLS), 102–125 (HNKL…SFNA), 126–150 (FDAL…STTH), 151–175 (LEKS…GETY), 176–199 (GEKE…FPTN), 200–223 (KEFH…NIKC), 224–250 (VLED…SNLT), 251–278 (LNNI…YFSI), 279–308 (SNVK…HQVV), 309–337 (SDVF…SGTR), 338–361 (MVHM…NLLT), 362–388 (DTVF…KELS), 389–414 (KIAE…SYDE), 415–437 (KKGD…ILTD), 438–457 (TIFR…SNKI), 458–478 (KSIP…VAFN), 479–500 (SLTD…IDHN), and 501–524 (SVSH…AGDN). Cys-110 and Cys-132 are joined by a disulfide. Residues Asn-137 and Asn-163 are each glycosylated (N-linked (GlcNAc...) asparagine). A disulfide bridge connects residues Cys-223 and Cys-230. An interaction with bacterial lipopeptide region spans residues 313–316 (GFPQ). The N-linked (GlcNAc...) asparagine glycan is linked to Asn-330. Cys-343 and Cys-368 are joined by a disulfide. Cys-419 and Cys-442 are joined by a disulfide. Asn-429 carries N-linked (GlcNAc...) asparagine glycosylation. The LRRCT domain occupies 525–579 (PFQCTCELGEFVKNIDQVSSEVLEGWPDSYKCDYPESYRGTLLKDFHMSELSCNI). Residue Asn-578 is glycosylated (N-linked (GlcNAc...) asparagine). A helical membrane pass occupies residues 581–601 (LLIVTIVATMLVLAVTVTSLC). Residues 602–786 (SYLDLPWYLR…NIKLTEQAKK (185 aa)) are Cytoplasmic-facing. Positions 635–776 (LQFHAFISYS…LFWANLRAAI (142 aa)) constitute a TIR domain.

This sequence belongs to the Toll-like receptor family. In terms of assembly, interacts (via extracellular domain) with TLR2. TLR2 seems to exist in heterodimers with either TLR1 or TLR6 before stimulation by the ligand. The heterodimers form bigger oligomers in response to their corresponding ligands as well as further heterotypic associations with other receptors such as CD14 and/or CD36. The activation cluster TLR2:TLR1:CD14 forms in response to triacylated lipopeptides. Binds MYD88 (via TIR domain). Interacts with CNPY3. Interacts with neutrophil recruitment protein from Aedes aegypti saliva; the interaction probably promotes activation of canonical NF-kappa-B signaling in skin-resident macrophages and subsequent expression of neutrophil chemoattractants. In terms of tissue distribution, ubiquitous. Highly expressed in spleen, ovary, peripheral blood leukocytes, thymus and small intestine.

Its subcellular location is the cell membrane. It localises to the cytoplasmic vesicle. It is found in the phagosome membrane. The protein localises to the membrane raft. The protein resides in the golgi apparatus. Its function is as follows. Participates in the innate immune response to microbial agents. Specifically recognizes diacylated and triacylated lipopeptides. Cooperates with TLR2 to mediate the innate immune response to bacterial lipoproteins or lipopeptides. Forms the activation cluster TLR2:TLR1:CD14 in response to triacylated lipopeptides, this cluster triggers signaling from the cell surface and subsequently is targeted to the Golgi in a lipid-raft dependent pathway. Acts via MYD88 and TRAF6, leading to NF-kappa-B activation, cytokine secretion and the inflammatory response. In Homo sapiens (Human), this protein is Toll-like receptor 1 (TLR1).